Here is a 159-residue protein sequence, read N- to C-terminus: SsrA-binding protein (159 aa).

Positions lysine 134–glycine 159 are disordered. The segment covering aspartate 137–glycine 159 has biased composition (basic and acidic residues).

Belongs to the SmpB family.

It is found in the cytoplasm. In terms of biological role, required for rescue of stalled ribosomes mediated by trans-translation. Binds to transfer-messenger RNA (tmRNA), required for stable association of tmRNA with ribosomes. tmRNA and SmpB together mimic tRNA shape, replacing the anticodon stem-loop with SmpB. tmRNA is encoded by the ssrA gene; the 2 termini fold to resemble tRNA(Ala) and it encodes a 'tag peptide', a short internal open reading frame. During trans-translation Ala-aminoacylated tmRNA acts like a tRNA, entering the A-site of stalled ribosomes, displacing the stalled mRNA. The ribosome then switches to translate the ORF on the tmRNA; the nascent peptide is terminated with the 'tag peptide' encoded by the tmRNA and targeted for degradation. The ribosome is freed to recommence translation, which seems to be the essential function of trans-translation. This Rhizobium meliloti (strain 1021) (Ensifer meliloti) protein is SsrA-binding protein.